The primary structure comprises 465 residues: FeMo cofactor biosynthesis protein FixZ (465 aa).

Residues 1–36 (MSEPEIKVGKTSSALFDRAPMAPSMPGGRASSSHGL) are disordered. One can recognise a Radical SAM core domain in the interval 61-312 (HHYFARMHXX…MRHCQQCRAD (252 aa)). [4Fe-4S] cluster is bound by residues C75 and C79. Y81 contributes to the S-adenosyl-L-methionine binding site. Residue C82 coordinates [4Fe-4S] cluster. Residues G129, T181, and I233 each coordinate S-adenosyl-L-methionine. Positions 306 and 309 each coordinate [4Fe-4S] cluster.

The protein belongs to the radical SAM superfamily. NifB family. The cofactor is [4Fe-4S] cluster.

It functions in the pathway cofactor biosynthesis; Fe-Mo cofactor biosynthesis. Functionally, involved in the biosynthesis of the iron-molybdenum cofactor (FeMo-co or M-cluster) found in the dinitrogenase enzyme of the nitrogenase complex in nitrogen-fixing microorganisms. Catalyzes the crucial step of radical SAM-dependent carbide insertion that occurs concomitant with the insertion of a 9th sulfur and the rearrangement/coupling of two [4Fe-4S] clusters into a [8Fe-9S-C] cluster, the precursor to the M-cluster. In Rhizobium leguminosarum, this protein is FeMo cofactor biosynthesis protein FixZ (fixZ).